Consider the following 179-residue polypeptide: Deoxyuridine 5'-triphosphate nucleotidohydrolase, mitochondrial (179 aa).

The N-terminal 41 residues, 1–41 (MPIEQKYFSLFSNLFKRLTTNNNNNNYLKMAPPNFETFKVK), are a transit peptide targeting the mitochondrion. Residues 97-99 (RSG), 111-114 (GVID), Gly-122, Arg-165, and 170-171 (FG) contribute to the dUTP site.

The protein belongs to the dUTPase family. As to quaternary structure, homotrimer. Mg(2+) serves as cofactor.

It localises to the mitochondrion. The catalysed reaction is dUTP + H2O = dUMP + diphosphate + H(+). It functions in the pathway pyrimidine metabolism; dUMP biosynthesis; dUMP from dCTP (dUTP route): step 2/2. Its function is as follows. This enzyme is involved in nucleotide metabolism: it produces dUMP, the immediate precursor of thymidine nucleotides and it decreases the intracellular concentration of dUTP so that uracil cannot be incorporated into DNA. The protein is Deoxyuridine 5'-triphosphate nucleotidohydrolase, mitochondrial (dut) of Dictyostelium discoideum (Social amoeba).